Consider the following 103-residue polypeptide: Regulator of rDNA transcription protein 1 (103 aa).

2 helical membrane passes run 9-33 (FLPS…WVLV) and 40-57 (VAFI…YTFF).

The protein resides in the membrane. Functionally, identified in a screen for mutants with decreased levels of rDNA transcription. This chain is Regulator of rDNA transcription protein 1 (RRT1), found in Saccharomyces cerevisiae (strain ATCC 204508 / S288c) (Baker's yeast).